The sequence spans 325 residues: MAMEGPILCRAVMQAKLPVTMISNSLTKSGQLGTAFLGCVCKYRNITRLISPIYQPAQKNFATVCGSFSSSSDGNGYMAGNFSESDEDYVNSTVLEAVEVRSGAEGYVIKMRDGKNLRCVHNNSQGRNIPESAPQPAIVLRIEDGSETLLPIIVLEMPSVLLMAAIRNVHIARPTIYQVVKEMIDKMGYEVKLVRINKRIQEAYCAELFLTKVGDHTESITFDLRPSDAINIAVRCKVPIQVHRSLAYSDGIRSVEPARMAIAAGMSDGLLFTELDRPDGQPCVEAQEFGLIRNMLIAAVEERYKDAATWRDKLMLLRSKRKNWA.

In terms of domain architecture, BFN spans 119–254 (CVHNNSQGRN…SLAYSDGIRS (136 aa)). The UVR domain maps to 285 to 320 (EAQEFGLIRNMLIAAVEERYKDAATWRDKLMLLRSK).

It belongs to the bifunctional nuclease family.

Its subcellular location is the nucleus. In terms of biological role, bifunctional nuclease with both RNase and DNase activities. Involved in basal defense response. Participates in abscisic acid-derived callose deposition following infection by a necrotrophic pathogen. The sequence is that of Bifunctional nuclease 2 (BBD2) from Oryza sativa subsp. japonica (Rice).